Consider the following 441-residue polypeptide: 23S rRNA (uracil(1939)-C(5))-methyltransferase RlmD (441 aa).

Residues 10–68 (KPLKQQSLVLDITAMDHHGRGIAKHNNKVCFVSNALPNEQVKATIIADKARYSEAQTHK) form the TRAM domain. [4Fe-4S] cluster is bound by residues Cys-81, Cys-87, Cys-90, and Cys-169. S-adenosyl-L-methionine is bound by residues Gln-274, Phe-303, Asn-308, Glu-324, Asp-351, and Asp-372. Cys-398 functions as the Nucleophile in the catalytic mechanism.

This sequence belongs to the class I-like SAM-binding methyltransferase superfamily. RNA M5U methyltransferase family. RlmD subfamily.

It catalyses the reaction uridine(1939) in 23S rRNA + S-adenosyl-L-methionine = 5-methyluridine(1939) in 23S rRNA + S-adenosyl-L-homocysteine + H(+). In terms of biological role, catalyzes the formation of 5-methyl-uridine at position 1939 (m5U1939) in 23S rRNA. This is 23S rRNA (uracil(1939)-C(5))-methyltransferase RlmD from Pseudoalteromonas translucida (strain TAC 125).